We begin with the raw amino-acid sequence, 439 residues long: MESGKISVETETLSKTLIKPSSPTPQSLSRYNLSYNDQNIYQTCVSVGFFYENPDGIEISTIREQLQNSLSKTLVSYYPFAGKVVKNDYIHCNDDGIEFVEVRIRCRMNDILKYELRSYARDLVLPKRVTVGSEDTTAIVQLSHFDCGGLAVAFGISHKVADGGTIASFMKDWAASACYLSSSHHVPTPLLVSDSIFPRQDNIICEQFPTSKNCVEKTFIFPPEAIEKLKSKAVEFGIEKPTRVEVLTAFLSRCATVAGKSAAKNNNCGQSLPFPVLQAINLRPILELPQNSVGNLVSIYFSRTIKENDYLNEKEYTKLVINELRKEKQKIKNLSREKLTYVAQMEEFVKSLKEFDISNFLDIDAYLSDSWCRFPFYDVDFGWGKPIWVCLFQPYIKNCVVMMDYPFGDDYGIEAIVSFEQEKMSAFEKNEQLLQFVSN.

Catalysis depends on H158, which acts as the Proton acceptor. The stretch at 317-344 forms a coiled coil; that stretch reads TKLVINELRKEKQKIKNLSREKLTYVAQ. The Proton acceptor role is filled by D380.

The protein belongs to the plant acyltransferase family. In terms of assembly, monomer. In terms of tissue distribution, predominantly expressed in young leaves of mature plants. Low expression in stems and flowers and not detected in roots. Confined to the laticifer and idioblast cells of leaves, stems, and flower buds.

It is found in the cytoplasm. It localises to the nucleus. The catalysed reaction is 4-O-deacetylvindoline + acetyl-CoA = vindoline + CoA. It participates in alkaloid biosynthesis; vindoline biosynthesis. Its function is as follows. Involved in the biosynthesis of vindoline, a precursor of vinblastine and vincristine. The sequence is that of Deacetylvindoline O-acetyltransferase from Catharanthus roseus (Madagascar periwinkle).